The chain runs to 475 residues: Pyruvate kinase (475 aa).

Arginine 33 is a binding site for substrate. Positions 35, 37, and 67 each coordinate K(+). ATP is bound at residue 35–38; it reads NFSH. ATP contacts are provided by arginine 74 and lysine 155. Glutamate 220 serves as a coordination point for Mg(2+). Substrate-binding residues include glycine 243, aspartate 244, and threonine 276. Mg(2+) is bound at residue aspartate 244.

It belongs to the pyruvate kinase family. In terms of assembly, homotetramer. It depends on Mg(2+) as a cofactor. Requires K(+) as cofactor.

It catalyses the reaction pyruvate + ATP = phosphoenolpyruvate + ADP + H(+). It participates in carbohydrate degradation; glycolysis; pyruvate from D-glyceraldehyde 3-phosphate: step 5/5. This Corynebacterium glutamicum (strain ATCC 13032 / DSM 20300 / JCM 1318 / BCRC 11384 / CCUG 27702 / LMG 3730 / NBRC 12168 / NCIMB 10025 / NRRL B-2784 / 534) protein is Pyruvate kinase (pyk).